A 331-amino-acid polypeptide reads, in one-letter code: Transmembrane protein 59-like (331 aa).

The N-terminal stretch at 1 to 21 is a signal peptide; that stretch reads MAAVALPLLLLLASPATPTPA. The disordered stretch occupies residues 15-62; it reads PATPTPARDPFSPQLGDTQRCQQRCRQRHPGLPPAQPEPEGPSESPNN. Positions 45–54 are enriched in pro residues; that stretch reads GLPPAQPEPE. Asn-90 carries an N-linked (GlcNAc...) asparagine glycan. A helical transmembrane segment spans residues 258–278; that stretch reads VLFCCLFLSVLIILWLSCCTL. The Microbody targeting signal motif lies at 329 to 331; that stretch reads TTL.

Belongs to the TMEM59 family.

Its subcellular location is the golgi apparatus membrane. Modulates the O-glycosylation and complex N-glycosylation steps occurring during the Golgi maturation of APP. Inhibits APP transport to the cell surface and further shedding. This is Transmembrane protein 59-like (Tmem59l) from Rattus norvegicus (Rat).